The primary structure comprises 329 residues: Indolepyruvate C-methyltransferase (329 aa).

The protein belongs to the methyltransferase superfamily.

It catalyses the reaction indole-3-pyruvate + S-adenosyl-L-methionine = (R)-3-(indol-3-yl)-2-oxobutanoate + S-adenosyl-L-homocysteine + H(+). Its activity is regulated as follows. Strongly inhibited by the thiol reagents p-chloromercuribenzoate and N-ethylmaleimide. Partially inhibited by o-phenanthroline and 2,2'-dipyridyl. Competitively inhibited by L-tryptophan and indolmycin. Its function is as follows. Involved in the biosynthesis of the antibiotic indolmycin, an inhibitor of the bacterial tryptophan-tRNA synthetases. Catalyzes the transfer of a methyl group from S-adenosyl-L-methionine to position 3 of the aliphatic side chain of (indol-3-yl)pyruvate to yield 3-methylindolepyruvate. The polypeptide is Indolepyruvate C-methyltransferase (Streptomyces griseus).